We begin with the raw amino-acid sequence, 168 residues long: Small ribosomal subunit protein uS5 (168 aa).

The region spanning 13–76 is the S5 DRBM domain; that stretch reads LAEKLIAVNR…EKARRNMINV (64 aa).

It belongs to the universal ribosomal protein uS5 family. In terms of assembly, part of the 30S ribosomal subunit. Contacts proteins S4 and S8.

Functionally, with S4 and S12 plays an important role in translational accuracy. In terms of biological role, located at the back of the 30S subunit body where it stabilizes the conformation of the head with respect to the body. This Pseudoalteromonas translucida (strain TAC 125) protein is Small ribosomal subunit protein uS5.